The primary structure comprises 421 residues: Acetate kinase (421 aa).

N7 is a binding site for Mg(2+). K14 serves as a coordination point for ATP. R91 contributes to the substrate binding site. Catalysis depends on D148, which acts as the Proton donor/acceptor. Residues 208–212 and 283–285 contribute to the ATP site; these read HIGNG and DRR. Mg(2+) is bound at residue E387.

Belongs to the acetokinase family. As to quaternary structure, homodimer. Mg(2+) is required as a cofactor. Requires Mn(2+) as cofactor.

It is found in the cytoplasm. The catalysed reaction is acetate + ATP = acetyl phosphate + ADP. It participates in metabolic intermediate biosynthesis; acetyl-CoA biosynthesis; acetyl-CoA from acetate: step 1/2. In terms of biological role, catalyzes the formation of acetyl phosphate from acetate and ATP. Can also catalyze the reverse reaction. The sequence is that of Acetate kinase from Geobacter metallireducens (strain ATCC 53774 / DSM 7210 / GS-15).